The chain runs to 2507 residues: Putative neurobeachin homolog (2507 aa).

Disordered regions lie at residues 1 to 109 (MEIS…PPLP), 1307 to 1377 (PSSP…DGGR), and 1629 to 1649 (SRHE…EISE). Residues 24–37 (PVEEGEEVNDEESN) show a composition bias toward acidic residues. Residues 1317–1340 (TTQKQENSENVNSETSPENGSNGK) are compositionally biased toward polar residues. Residues 1360 to 1372 (DGEEEENGEEGQG) are compositionally biased toward acidic residues. The region spanning 1690–1798 (PSSQSACFST…AVKKVVYQLP (109 aa)) is the BEACH-type PH domain. Positions 1817–2106 (MTPRQLFKHS…QLLTEAHPPR (290 aa)) constitute a BEACH domain. WD repeat units follow at residues 2265–2308 (GHGD…GFIA), 2326–2365 (GHEA…LRRI), 2405–2444 (LVDD…KLYT), and 2447–2486 (PLNS…WHYE).

It belongs to the WD repeat neurobeachin family. In terms of assembly, interacts with RII subunit of PKA. As to expression, expressed in vulval precursor cells and rectal epithelia in L2 and L3 larvae. In L4 larvae, expression is seen in intestinal epithelial cells.

The protein resides in the cytoplasm. It localises to the membrane. The protein localises to the nucleus. Its function is as follows. Binds to type II regulatory subunits of protein kinase A and anchors/targets them to the membrane. May anchor the kinase to cytoskeletal and/or organelle-associated proteins. Regulates endosomal traffic in polarized epithelial cells such as the vulval precursor cells and intestinal cells. Thought to act as a negative regulator of lin-12 activity in vulval precursor cells. May have a role in the internalization process from basolateral surface of polarized epithelial cells. This chain is Putative neurobeachin homolog (sel-2), found in Caenorhabditis elegans.